The primary structure comprises 1372 residues: DNA-directed RNA polymerase subunit beta' (1372 aa).

Zn(2+)-binding residues include Cys-69, Cys-71, Cys-84, and Cys-87. Mg(2+)-binding residues include Asp-460, Asp-462, and Asp-464. Residues Cys-808, Cys-882, Cys-889, and Cys-892 each contribute to the Zn(2+) site.

This sequence belongs to the RNA polymerase beta' chain family. The RNAP catalytic core consists of 2 alpha, 1 beta, 1 beta' and 1 omega subunit. When a sigma factor is associated with the core the holoenzyme is formed, which can initiate transcription. Mg(2+) is required as a cofactor. It depends on Zn(2+) as a cofactor.

It carries out the reaction RNA(n) + a ribonucleoside 5'-triphosphate = RNA(n+1) + diphosphate. DNA-dependent RNA polymerase catalyzes the transcription of DNA into RNA using the four ribonucleoside triphosphates as substrates. The chain is DNA-directed RNA polymerase subunit beta' from Rickettsia akari (strain Hartford).